The sequence spans 866 residues: Protein SEY1 (866 aa).

Topologically, residues 1 to 746 are cytoplasmic; sequence MVSNGHFAYA…KRSAIGGMTQ (746 aa). The region spanning 48–305 is the GB1/RHD3-type G domain; it reads GFNYHLISVF…IPADGFAVYA (258 aa). 58 to 65 provides a ligand contact to GTP; that stretch reads GSQSTGKS. Residues 480 to 506 adopt a coiled-coil conformation; the sequence is SNYTQELALYQKDLEKISAQLRKDEMR. The chain crosses the membrane as a helical span at residues 747-767; that stretch reads IPVYFYILLLALGWNEIIAVL. Topologically, residues 768–770 are lumenal; it reads RNP. A helical membrane pass occupies residues 771-791; the sequence is VYFFMLFLCSVAAYIIYQLNL. The Cytoplasmic segment spans residues 792 to 866; that stretch reads WGPMVKMAEA…DDEVEGEETW (75 aa). The tract at residues 840 to 866 is disordered; sequence SHVRSGRNATKINERDDDDEVEGEETW. Positions 854-866 are enriched in acidic residues; sequence RDDDDEVEGEETW.

This sequence belongs to the TRAFAC class dynamin-like GTPase superfamily. GB1/RHD3 GTPase family. RHD3 subfamily.

It is found in the endoplasmic reticulum membrane. Its function is as follows. Cooperates with the reticulon proteins and tubule-shaping DP1 family proteins to generate and maintain the structure of the tubular endoplasmic reticulum network. Has GTPase activity, which is required for its function in ER organization. This chain is Protein SEY1, found in Coccidioides immitis (strain RS) (Valley fever fungus).